Reading from the N-terminus, the 155-residue chain is Small ribosomal subunit protein uS7c (155 aa).

This sequence belongs to the universal ribosomal protein uS7 family. As to quaternary structure, part of the 30S ribosomal subunit.

The protein resides in the plastid. It is found in the chloroplast. In terms of biological role, one of the primary rRNA binding proteins, it binds directly to 16S rRNA where it nucleates assembly of the head domain of the 30S subunit. The sequence is that of Small ribosomal subunit protein uS7c (rps7) from Cedrus deodara (Deodar cedar).